We begin with the raw amino-acid sequence, 198 residues long: Glycerol-3-phosphate acyltransferase (198 aa).

5 helical membrane passes run 10–30 (LIPI…WILV), 57–77 (GISF…ILIL), 86–106 (IMYL…WFLF), 118–138 (VVLS…AVVF), and 160–180 (AVTE…IVLI).

This sequence belongs to the PlsY family. As to quaternary structure, probably interacts with PlsX.

The protein localises to the cell inner membrane. The catalysed reaction is an acyl phosphate + sn-glycerol 3-phosphate = a 1-acyl-sn-glycero-3-phosphate + phosphate. Its pathway is lipid metabolism; phospholipid metabolism. Its function is as follows. Catalyzes the transfer of an acyl group from acyl-phosphate (acyl-PO(4)) to glycerol-3-phosphate (G3P) to form lysophosphatidic acid (LPA). This enzyme utilizes acyl-phosphate as fatty acyl donor, but not acyl-CoA or acyl-ACP. The sequence is that of Glycerol-3-phosphate acyltransferase from Anaplasma marginale (strain St. Maries).